The following is a 201-amino-acid chain: MGLSPNATTAGPRLPRPLVAPAATGILDPRTGRPVGADDRFFLEVNNELADKGFFVAATDDLITWARTGSLMWMTFGLACCAVEMMQMSMPRYDAERFGFAPRASPRQSDVMIVAGTLTNKMAPALRKVYDQMPEPRYVISMGSCANGGGYYHYSYAVVRGCDRIVPIDIYVPGCPPTAEALLYGVMLLQKKIRRTGTIER.

Residues cysteine 80, cysteine 81, cysteine 145, and cysteine 175 each coordinate [4Fe-4S] cluster.

Belongs to the complex I 20 kDa subunit family. NDH-1 is composed of 14 different subunits. Subunits NuoB, C, D, E, F, and G constitute the peripheral sector of the complex. [4Fe-4S] cluster serves as cofactor.

The protein resides in the cell inner membrane. It carries out the reaction a quinone + NADH + 5 H(+)(in) = a quinol + NAD(+) + 4 H(+)(out). In terms of biological role, NDH-1 shuttles electrons from NADH, via FMN and iron-sulfur (Fe-S) centers, to quinones in the respiratory chain. The immediate electron acceptor for the enzyme in this species is believed to be ubiquinone. Couples the redox reaction to proton translocation (for every two electrons transferred, four hydrogen ions are translocated across the cytoplasmic membrane), and thus conserves the redox energy in a proton gradient. The protein is NADH-quinone oxidoreductase subunit B 1 of Rhodopseudomonas palustris (strain BisB18).